The following is a 122-amino-acid chain: uncharacterized protein (122 aa).

This is an uncharacterized protein from Haemophilus phage HP1 (strain HP1c1) (Bacteriophage HP1).